The following is a 491-amino-acid chain: Chromosomal replication initiator protein DnaA (491 aa).

The domain I, interacts with DnaA modulators stretch occupies residues 1–69 (MTTWDKCLKK…TIQECHGNDL (69 aa)). A domain II region spans residues 69 to 154 (LIIEYSNKKF…KEDEEYSFGL (86 aa)). The segment at 155–371 (PLKEKYVFDS…GALNRVLTTS (217 aa)) is domain III, AAA+ region. ATP-binding residues include Gly199, Gly201, Lys202, and Thr203. The interval 372–491 (KFNHKDPTIE…YELLLNKISR (120 aa)) is domain IV, binds dsDNA.

It belongs to the DnaA family. In terms of assembly, oligomerizes as a right-handed, spiral filament on DNA at oriC.

Its subcellular location is the cytoplasm. Its function is as follows. Plays an essential role in the initiation and regulation of chromosomal replication. ATP-DnaA binds to the origin of replication (oriC) to initiate formation of the DNA replication initiation complex once per cell cycle. Binds the DnaA box (a 9 base pair repeat at the origin) and separates the double-stranded (ds)DNA. Forms a right-handed helical filament on oriC DNA; dsDNA binds to the exterior of the filament while single-stranded (ss)DNA is stabiized in the filament's interior. The ATP-DnaA-oriC complex binds and stabilizes one strand of the AT-rich DNA unwinding element (DUE), permitting loading of DNA polymerase. After initiation quickly degrades to an ADP-DnaA complex that is not apt for DNA replication. Binds acidic phospholipids. The chain is Chromosomal replication initiator protein DnaA from Francisella tularensis subsp. tularensis (strain WY96-3418).